A 214-amino-acid polypeptide reads, in one-letter code: Phosphatidylcholine transfer protein (214 aa).

Met-1 is modified (N-acetylmethionine). The region spanning 1–212 (MAGAACCFSD…MVKACQNYHK (212 aa)) is the START domain. Residues Tyr-72 and Arg-78 each coordinate a 1,2-diacyl-sn-glycero-3-phosphocholine. Ser-139 is subject to Phosphoserine. Gln-157 serves as a coordination point for a 1,2-diacyl-sn-glycero-3-phosphocholine.

In terms of assembly, interacts with ACOT13/THEM2. Abundant in liver of pups but levels in liver decrease 10-fold about 2 weeks after birth. In adult, highly expressed in epididymis, testis, kidney and bone-marrow derived mast cells.

The protein localises to the cytoplasm. Its function is as follows. Catalyzes the transfer of phosphatidylcholine between membranes. Binds a single lipid molecule. This is Phosphatidylcholine transfer protein (Pctp) from Mus musculus (Mouse).